Here is a 422-residue protein sequence, read N- to C-terminus: MSFDINWNQLTIDDTINQSIKEFLDQQFKKISLPSFISNLSVTDFNLGEIPPEITIRHIGDPFEEFYEDEDNLGATNETNHNLNDERSTMGKSQENGIHKDNAYNSQNFDDDDDDDEGVDEDDDDDEYDDHDLGTINEGISLLNFNDSSTTPSGNSFGGSIAPLPPPPLNPSRDSFHSILHPYGVNSIIGATGAGSETPTNILNQNYLSSRVLPKISVKQKQPHHDDNDIQLIVEINYKGDMHINLLVNLLVNYPSPNFISLPIKLHITDIVIHSIATIAYLKKSVYLSFLCDVDDAFPDFDSNNNAQTPTSTTGGNFVDYYSNDAAINKERIDIVKKIKIESEIGEVENNILRNVGKVEKFLVEQLRNILRDEIAWPSWICIDMNDDGDDDDDDEVEDSNVSDGDGKDNDGKHGDGPTHEV.

In terms of domain architecture, SMP-LTD spans 1–386 (MSFDINWNQL…WPSWICIDMN (386 aa)). Disordered stretches follow at residues 74–134 (GATN…HDLG) and 387–422 (DDGDDDDDDEVEDSNVSDGDGKDNDGKHGDGPTHEV). Composition is skewed to acidic residues over residues 109 to 130 (FDDDDDDDEGVDEDDDDDEYDD) and 387 to 401 (DDGDDDDDDEVEDSN). A compositionally biased stretch (basic and acidic residues) spans 405–422 (GDGKDNDGKHGDGPTHEV).

The protein belongs to the MDM12 family. Component of the ER-mitochondria encounter structure (ERMES) or MDM complex, composed of MMM1, MDM10, MDM12 and MDM34. An MMM1 homodimer associates with one molecule of MDM12 on each side in a pairwise head-to-tail manner, and the SMP-LTD domains of MMM1 and MDM12 generate a continuous hydrophobic tunnel for phospholipid trafficking.

It localises to the mitochondrion outer membrane. It is found in the endoplasmic reticulum membrane. Its function is as follows. Component of the ERMES/MDM complex, which serves as a molecular tether to connect the endoplasmic reticulum (ER) and mitochondria. Components of this complex are involved in the control of mitochondrial shape and protein biogenesis, and function in nonvesicular lipid trafficking between the ER and mitochondria. MDM12 is required for the interaction of the ER-resident membrane protein MMM1 and the outer mitochondrial membrane-resident beta-barrel protein MDM10. The MDM12-MMM1 subcomplex functions in the major beta-barrel assembly pathway that is responsible for biogenesis of all mitochondrial outer membrane beta-barrel proteins, and acts in a late step after the SAM complex. The MDM10-MDM12-MMM1 subcomplex further acts in the TOM40-specific pathway after the action of the MDM12-MMM1 complex. Essential for establishing and maintaining the structure of mitochondria and maintenance of mtDNA nucleoids. The protein is Mitochondrial distribution and morphology protein 12 of Candida dubliniensis (strain CD36 / ATCC MYA-646 / CBS 7987 / NCPF 3949 / NRRL Y-17841) (Yeast).